The sequence spans 346 residues: L-threonine dehydratase catabolic TdcB (346 aa).

59 to 60 (FT) provides a ligand contact to AMP. At K64 the chain carries N6-(pyridoxal phosphate)lysine. Residues Q94, 125-126 (GY), and N321 each bind AMP.

It belongs to the serine/threonine dehydratase family. In the native structure, TdcB is in a dimeric form, whereas in the TdcB-AMP complex, it exists in a tetrameric form (dimer of dimers). Pyridoxal 5'-phosphate is required as a cofactor.

It carries out the reaction L-threonine = 2-oxobutanoate + NH4(+). Its pathway is amino-acid degradation; L-threonine degradation via propanoate pathway; propanoate from L-threonine: step 1/4. Each protein molecule can bind up to four molecules of AMP, which act as an allosteric activator to the enzyme. Functionally, catalyzes the anaerobic formation of alpha-ketobutyrate and ammonia from threonine in a two-step reaction. The first step involved a dehydration of threonine and a production of enamine intermediates (aminocrotonate), which tautomerizes to its imine form (iminobutyrate). Both intermediates are unstable and short-lived. The second step is the nonenzymatic hydrolysis of the enamine/imine intermediates to form 2-ketobutyrate and free ammonia. In the low water environment of the cell, the second step is accelerated by RidA. The polypeptide is L-threonine dehydratase catabolic TdcB (tdcB) (Staphylococcus aureus (strain USA300)).